Reading from the N-terminus, the 154-residue chain is 6,7-dimethyl-8-ribityllumazine synthase (154 aa).

5-amino-6-(D-ribitylamino)uracil-binding positions include F22, 57 to 59 (AYE), and 81 to 83 (AVI). (2S)-2-hydroxy-3-oxobutyl phosphate is bound at residue 86-87 (GT). Residue H89 is the Proton donor of the active site. F114 contributes to the 5-amino-6-(D-ribitylamino)uracil binding site. Residue R128 coordinates (2S)-2-hydroxy-3-oxobutyl phosphate.

Belongs to the DMRL synthase family. In terms of assembly, forms an icosahedral capsid composed of 60 subunits, arranged as a dodecamer of pentamers.

The enzyme catalyses (2S)-2-hydroxy-3-oxobutyl phosphate + 5-amino-6-(D-ribitylamino)uracil = 6,7-dimethyl-8-(1-D-ribityl)lumazine + phosphate + 2 H2O + H(+). Its pathway is cofactor biosynthesis; riboflavin biosynthesis; riboflavin from 2-hydroxy-3-oxobutyl phosphate and 5-amino-6-(D-ribitylamino)uracil: step 1/2. Catalyzes the formation of 6,7-dimethyl-8-ribityllumazine by condensation of 5-amino-6-(D-ribitylamino)uracil with 3,4-dihydroxy-2-butanone 4-phosphate. This is the penultimate step in the biosynthesis of riboflavin. In Colwellia psychrerythraea (strain 34H / ATCC BAA-681) (Vibrio psychroerythus), this protein is 6,7-dimethyl-8-ribityllumazine synthase.